The primary structure comprises 145 residues: Large ribosomal subunit protein uL15 (145 aa).

The tract at residues 1-52 (MFNLLKPKGASKRRKIVGRGPGSGLGKTSGRGQKGQKARNTSPRLGFEGGQT) is disordered. A compositionally biased stretch (gly residues) spans 19-33 (RGPGSGLGKTSGRGQ).

Belongs to the universal ribosomal protein uL15 family. Part of the 50S ribosomal subunit.

Functionally, binds to the 23S rRNA. In Borreliella burgdorferi (strain ATCC 35210 / DSM 4680 / CIP 102532 / B31) (Borrelia burgdorferi), this protein is Large ribosomal subunit protein uL15.